We begin with the raw amino-acid sequence, 154 residues long: Large ribosomal subunit protein uL30 (154 aa).

Positions 114–146 (PTLRLHPPRGGHDGVKHPVKEGGQLGKHDTEGI) are disordered. A compositionally biased stretch (basic and acidic residues) spans 123 to 144 (GGHDGVKHPVKEGGQLGKHDTE).

It belongs to the universal ribosomal protein uL30 family. In terms of assembly, part of the 50S ribosomal subunit. Binds 5S rRNA.

In terms of biological role, this is one of 5 proteins that mediate the attachment of the 5S rRNA onto the large ribosomal subunit, stabilizing the orientation of adjacent RNA domains. The protein is Large ribosomal subunit protein uL30 of Haloarcula marismortui (strain ATCC 43049 / DSM 3752 / JCM 8966 / VKM B-1809) (Halobacterium marismortui).